A 379-amino-acid polypeptide reads, in one-letter code: Intracellular hyaluronan-binding protein 4.S (379 aa).

Disordered regions lie at residues 52 to 260 (THRK…FSQE) and 332 to 379 (SLAR…PALA). Residues 71–81 (GKKESQKDRKA) show a composition bias toward basic and acidic residues. Positions 107-116 (KVTQNENVDS) are enriched in polar residues. Composition is skewed to basic and acidic residues over residues 118-133 (VKVDRTERRTAFREVR) and 139-158 (RSAEYSIEKPMEIMDQDKQM). Residues 162–174 (GGRGGMRGRGRGG) show a composition bias toward gly residues. Over residues 179 to 208 (TESDNLRGKREFDRHSGSDRARMRPEDKRG) the composition is skewed to basic and acidic residues. 2 stretches are compositionally biased toward acidic residues: residues 232–241 (EQVETTETEA) and 368–379 (NPDDPEDFPALA).

It belongs to the SERBP1-HABP4 family. In terms of assembly, associates with ribosomes; promoting ribosome stabilization. Interacts with eef2/eEF2; promoting ribosome stabilization.

It is found in the nucleus. The protein localises to the cytoplasm. It localises to the stress granule. Its subcellular location is the nucleolus. The protein resides in the nucleus speckle. It is found in the cajal body. Functionally, ribosome-binding protein that promotes ribosome hibernation, a process during which ribosomes are stabilized in an inactive state and preserved from proteasomal degradation. Acts via its association with eef2/eEF2 factor at the A-site of the ribosome, promoting ribosome stabilization in an inactive state compatible with storage. Plays a key role in ribosome hibernation in the mature egg by promoting ribosome stabilization. Ribosomes, which are produced in large quantities during oogenesis, are stored and translationally repressed in the egg and early embryo. The polypeptide is Intracellular hyaluronan-binding protein 4.S (Xenopus laevis (African clawed frog)).